A 1538-amino-acid polypeptide reads, in one-letter code: Arf-GAP with Rho-GAP domain, ANK repeat and PH domain-containing protein 3 (1538 aa).

The region spanning 4–68 (PQDLDIAVWL…LRLLRAGSAE (65 aa)) is the SAM domain. Disordered regions lie at residues 72–97 (DSHL…PVPK), 125–149 (SRNS…SVPN), and 215–242 (ASDR…EDAG). Positions 82–97 (TPSPAPDAQPPKPVPK) are enriched in pro residues. Positions 216-241 (SDRRDGRGVCQERAEHRQDLETREDA) are enriched in basic and acidic residues. 2 PH domains span residues 282-374 (VPLL…SCLK) and 389-478 (RPLR…EAVT). One can recognise an Arf-GAP domain in the interval 479–606 (ETLSDYEVAE…LFRKPHPRHP (128 aa)). PH domains follow at residues 671–785 (ATYR…FSPL) and 795–901 (LLRM…AGGG). The Rho-GAP domain occupies 903–1084 (TGLQEQQMSR…ELIDGYISVF (182 aa)). The region spanning 1113-1206 (GDLIMEVYIE…ASLLLRKVSM (94 aa)) is the Ras-associating domain. The PH 5 domain occupies 1219 to 1321 (ESPRVGLLRC…WTTSILKAQH (103 aa)). Threonine 1344 carries the phosphothreonine modification. Phosphotyrosine is present on residues tyrosine 1399 and tyrosine 1404. Positions 1425 to 1439 (WSAKSDPSLTSQRSF) are enriched in polar residues. The segment at 1425 to 1538 (WSAKSDPSLT…SNPPSSQPLT (114 aa)) is disordered. Residues serine 1438 and serine 1474 each carry the phosphoserine modification. 2 stretches are compositionally biased toward low complexity: residues 1476–1486 (EEQLLQELNNL) and 1494–1505 (ASCPESSSQPTS). A compositionally biased stretch (pro residues) spans 1506-1529 (PQAPSPTSLPTPTPSLPTQPPCTS).

As to quaternary structure, interacts (via SAM domain) with INPPL1/SHIP2. In terms of processing, tyrosine phosphorylated at a low basal level. PDGF treatment stimulates phosphorylation. Tyrosine phosphorylation is increased in cells that are in the process of becoming attached to a substrate and that start spreading and flattening.

It localises to the cytoplasm. The protein resides in the cell membrane. Its subcellular location is the cytoskeleton. It is found in the cell projection. The protein localises to the lamellipodium. It localises to the ruffle. Phosphatidylinositol 3,4,5-trisphosphate-dependent GTPase-activating protein that modulates actin cytoskeleton remodeling by regulating ARF and RHO family members. Is activated by phosphatidylinositol 3,4,5-trisphosphate (PtdIns(3,4,5)P3) binding. Can be activated by phosphatidylinositol 3,4-bisphosphate (PtdIns(3,4,5)P2) binding, albeit with lower efficiency. Acts preferentially on ARF5 and on RHOA. This Mus musculus (Mouse) protein is Arf-GAP with Rho-GAP domain, ANK repeat and PH domain-containing protein 3 (Arap3).